A 196-amino-acid polypeptide reads, in one-letter code: MAGNAAVGVLALQGDVSEHISAFESAIQNLGLNIPVVPVRKAEQILDLMALAIPGGESTTIMRLIEKNGMRNIIQNFKGGIFATCAGMVVSARDLINETRFTPLDLLDITVNRNAFGRQRESFEADLQISGFDTPFHAIFIRAPVITRAGPDVTILAEIPQGIVAAKKGKKLILSFHPEISHDLRMHEYFLKDMLG.

56–58 is an L-glutamine binding site; sequence GES. C85 (nucleophile) is an active-site residue. Residues R113 and 141 to 142 contribute to the L-glutamine site; that span reads IR. Catalysis depends on charge relay system residues H177 and E179.

The protein belongs to the glutaminase PdxT/SNO family. In terms of assembly, in the presence of PdxS, forms a dodecamer of heterodimers. Only shows activity in the heterodimer.

It carries out the reaction aldehydo-D-ribose 5-phosphate + D-glyceraldehyde 3-phosphate + L-glutamine = pyridoxal 5'-phosphate + L-glutamate + phosphate + 3 H2O + H(+). The catalysed reaction is L-glutamine + H2O = L-glutamate + NH4(+). It participates in cofactor biosynthesis; pyridoxal 5'-phosphate biosynthesis. Functionally, catalyzes the hydrolysis of glutamine to glutamate and ammonia as part of the biosynthesis of pyridoxal 5'-phosphate. The resulting ammonia molecule is channeled to the active site of PdxS. This chain is Pyridoxal 5'-phosphate synthase subunit PdxT, found in Methanospirillum hungatei JF-1 (strain ATCC 27890 / DSM 864 / NBRC 100397 / JF-1).